The sequence spans 250 residues: Ribonuclease HII (250 aa).

One can recognise an RNase H type-2 domain in the interval 66 to 250 (ELVAGVDEVG…TFAPVSDFFK (185 aa)). The a divalent metal cation site is built by D72, E73, and D164.

The protein belongs to the RNase HII family. It depends on Mn(2+) as a cofactor. Requires Mg(2+) as cofactor.

It is found in the cytoplasm. The catalysed reaction is Endonucleolytic cleavage to 5'-phosphomonoester.. Endonuclease that specifically degrades the RNA of RNA-DNA hybrids. The chain is Ribonuclease HII from Lactobacillus helveticus (strain DPC 4571).